The following is a 213-amino-acid chain: Imidazole glycerol phosphate synthase subunit HisH (213 aa).

Residues 4–213 enclose the Glutamine amidotransferase type-1 domain; it reads SIAIVDYGMG…LYRNFVHWKP (210 aa). The Nucleophile role is filled by Cys-83. Catalysis depends on residues His-193 and Glu-195.

As to quaternary structure, heterodimer of HisH and HisF.

The protein resides in the cytoplasm. It catalyses the reaction 5-[(5-phospho-1-deoxy-D-ribulos-1-ylimino)methylamino]-1-(5-phospho-beta-D-ribosyl)imidazole-4-carboxamide + L-glutamine = D-erythro-1-(imidazol-4-yl)glycerol 3-phosphate + 5-amino-1-(5-phospho-beta-D-ribosyl)imidazole-4-carboxamide + L-glutamate + H(+). It carries out the reaction L-glutamine + H2O = L-glutamate + NH4(+). It participates in amino-acid biosynthesis; L-histidine biosynthesis; L-histidine from 5-phospho-alpha-D-ribose 1-diphosphate: step 5/9. IGPS catalyzes the conversion of PRFAR and glutamine to IGP, AICAR and glutamate. The HisH subunit catalyzes the hydrolysis of glutamine to glutamate and ammonia as part of the synthesis of IGP and AICAR. The resulting ammonia molecule is channeled to the active site of HisF. The protein is Imidazole glycerol phosphate synthase subunit HisH of Burkholderia multivorans (strain ATCC 17616 / 249).